Consider the following 435-residue polypeptide: F-box only protein 9 (435 aa).

Positions 1 to 25 (MAEAEEDCHSDAVRVGDEGHESPAE) are disordered. Positions 7 to 25 (DCHSDAVRVGDEGHESPAE) are enriched in basic and acidic residues. The stretch at 82–115 (ARELFLKAVEEEQNGALYEAIKFYRRAMQLVPDI) is one TPR repeat. The residue at position 124 (Ser-124) is a Phosphoserine. In terms of domain architecture, F-box spans 173–224 (QTHISVLPMEVLMYIFRWVVSSDLDLRSLEQLSLVCRGFYICARDPEIWRLA).

In terms of assembly, part of the SCF (SKP1-CUL1-F-box) E3 ubiquitin-protein ligase complex SCF(FBXO9) composed of CUL1, SKP1, RBX1 and FBXO9. Interacts with TTI1 and TELO2; when TTI1 and TELO2 are phosphorylated by CK2.

It localises to the cytoplasm. It participates in protein modification; protein ubiquitination. Its function is as follows. Substrate recognition component of a SCF (SKP1-CUL1-F-box protein) E3 ubiquitin-protein ligase complex which mediates the ubiquitination and subsequent proteasomal degradation of target proteins and plays a role in several biological processes such as cell cycle, cell proliferation, or maintenance of chromosome stability. Ubiquitinates mTORC1-bound TTI1 and TELO2 when they are phosphorylated by CK2 following growth factor deprivation, leading to their degradation. In contrast, does not mediate ubiquitination of TTI1 and TELO2 when they are part of the mTORC2 complex. As a consequence, mTORC1 is inactivated to restrain cell growth and protein translation, while mTORC2 is the activated due to the relief of feedback inhibition by mTORC1. Plays a role in maintaining epithelial cell survival by regulating the turn-over of chromatin modulator PRMT4 through ubiquitination and degradation by the proteasomal pathway. Also regulates PPARgamma stability by facilitating PPARgamma/PPARG ubiquitination and thereby plays a role in adipocyte differentiation. The polypeptide is F-box only protein 9 (Fbxo9) (Rattus norvegicus (Rat)).